The primary structure comprises 451 residues: DNA polymerase delta subunit 3 (451 aa).

Disordered stretches follow at residues 187 to 241 (SQAK…AASS), 259 to 386 (KQTP…KVLR), and 404 to 451 (AWES…FAKK). Polar residues predominate over residues 200–216 (PSTSQVKEAPKASQTVE). Residues 225 to 241 (SAPAKKGSSAPKSAASS) show a composition bias toward low complexity. The segment covering 306 to 316 (QREEELRRMME) has biased composition (basic and acidic residues). The span at 329–353 (EEEEEEEEEEESEHEQLPAEEEPMA) shows a compositional bias: acidic residues. Positions 354 to 366 (EEPKAPEPVKEEP) are enriched in basic and acidic residues. The segment covering 376-386 (GRRRGKRKVLR) has biased composition (basic residues). The PIP-box signature appears at 441-448 (QGSIMSWF).

In terms of assembly, component of the DNA polymerase delta complex which consists of PolD1, PolD2, PolD3 and PolD4, with PolD1 bearing DNA polymerase and 3' to 5' proofreading exonuclease activities. Directly interacts with PCNA.

It is found in the nucleus. Accessory component of the DNA polymerase delta complex. The complex is required for the maintenance of genome integrity, acting in concert with the sliding clamp processivity factor PCNA. The protein is DNA polymerase delta subunit 3 of Chaetomium thermophilum (strain DSM 1495 / CBS 144.50 / IMI 039719) (Thermochaetoides thermophila).